Consider the following 376-residue polypeptide: Lipid-A-disaccharide synthase (376 aa).

This sequence belongs to the LpxB family.

It carries out the reaction a lipid X + a UDP-2-N,3-O-bis[(3R)-3-hydroxyacyl]-alpha-D-glucosamine = a lipid A disaccharide + UDP + H(+). Its pathway is bacterial outer membrane biogenesis; LPS lipid A biosynthesis. Its function is as follows. Condensation of UDP-2,3-diacylglucosamine and 2,3-diacylglucosamine-1-phosphate to form lipid A disaccharide, a precursor of lipid A, a phosphorylated glycolipid that anchors the lipopolysaccharide to the outer membrane of the cell. This Coxiella burnetii (strain CbuK_Q154) (Coxiella burnetii (strain Q154)) protein is Lipid-A-disaccharide synthase.